We begin with the raw amino-acid sequence, 73 residues long: Kappa-scoloptoxin SsmTx-I (73 aa).

Residues 1-25 (MMMMFSVVSVFLMLLLLKFHDLSMG) form the signal peptide. The propeptide occupies 26-37 (EEISLLKKVVRR). Cystine bridges form between Cys45-Cys56 and Cys50-Cys63.

It belongs to the scoloptoxin-04 family. As to expression, expressed by the venom gland.

Its subcellular location is the secreted. Functionally, exhibits highly specific blockage of Kv2.1/KCNB1 (IC(50)=41.7 nM) voltage-gated potassium channels. This blockage is not associated with a significant change in steady-state activation, suggesting that this toxin acts as a channel blocker rather than a gating-modifier. Shows potential analgesic activities in formalin-induced paw licking, thermal pain, and acetic acid-induced abdominal writhing mice models. The sequence is that of Kappa-scoloptoxin SsmTx-I from Scolopendra mutilans (Chinese red-headed centipede).